A 458-amino-acid chain; its full sequence is Photosystem II CP43 reaction center protein (458 aa).

Helical transmembrane passes span 54–78 (LFEV…PHLA), 119–140 (LRGP…KDKN), 163–185 (KAMF…RVIT), 240–260 (RPFN…LSYS), and 276–297 (WFNN…ASQA). E352 is a [CaMn4O5] cluster binding site. The chain crosses the membrane as a helical span at residues 432 to 456 (RARAAAAGFEKGIDRKTEPVLSMSD).

This sequence belongs to the PsbB/PsbC family. PsbC subfamily. As to quaternary structure, PSII is composed of 1 copy each of membrane proteins PsbA, PsbB, PsbC, PsbD, PsbE, PsbF, PsbH, PsbI, PsbJ, PsbK, PsbL, PsbM, PsbT, PsbX, PsbY, PsbZ, Psb30/Ycf12, peripheral proteins PsbO, CyanoQ (PsbQ), PsbU, PsbV and a large number of cofactors. It forms dimeric complexes. It depends on Binds multiple chlorophylls and provides some of the ligands for the Ca-4Mn-5O cluster of the oxygen-evolving complex. It may also provide a ligand for a Cl- that is required for oxygen evolution. PSII binds additional chlorophylls, carotenoids and specific lipids. as a cofactor.

The protein resides in the cellular thylakoid membrane. Functionally, one of the components of the core complex of photosystem II (PSII). It binds chlorophyll and helps catalyze the primary light-induced photochemical processes of PSII. PSII is a light-driven water:plastoquinone oxidoreductase, using light energy to abstract electrons from H(2)O, generating O(2) and a proton gradient subsequently used for ATP formation. The sequence is that of Photosystem II CP43 reaction center protein from Prochlorothrix hollandica.